The sequence spans 499 residues: MTDIKRNFSDIASPANLDDTKKLHVDSTATTKVGRKPIDTEPKSKRTAQNRAAQRAYRERKERKMKELEDKVRLLEDANVRALTETDFLRAQVDVLKNELAKYTGGSDFSDLNLPTKVGHLSHPNNHHSNVSTGTPHGSMSSSNSVASLDNDKPSSASSVSNNSPGFAFDNPWSKDNIQKLKHQHQQQQQKVPQGVPDLVSGSSSSSTPLNDNLLVTPESLTGLSTSSKYTGQNNVPTNLDFTNQFDEQVDPFCVKLNEACGTKSNPVPKFKRSGSKANTSVTNNSPLAHLVSPESQQYTNSSNIDFMNDPFFNGVGTDYNFNFDSKNGSIQDPLSFLQDDNFDLALAFGDPSPTGNEAEADPISLLTTEESIYDPLTNNSDKLCSTVKADDVNTDFNFNDFVKNSLPEKQEKGKYEPPSTSKTTNNNEEEDKDEVVPAPPQTLKCSEIWDRITSHPKYTELDIDGLCNELKSKAKCSEKGVVINTADVNQLLERSIKH.

Residues 1 to 64 (MTDIKRNFSD…RAYRERKERK (64 aa)) form a disordered region. Short sequence motifs (bipartite nuclear localization signal) lie at residues 20-27 (TKKLHVDS) and 44-51 (SKRTAQNR). The 64-residue stretch at 40 to 103 (TEPKSKRTAQ…DVLKNELAKY (64 aa)) folds into the bZIP domain. The tract at residues 43–66 (KSKRTAQNRAAQRAYRERKERKMK) is basic motif. Positions 49–105 (QNRAAQRAYRERKERKMKELEDKVRLLEDANVRALTETDFLRAQVDVLKNELAKYTG) form a coiled coil. Residues 68–75 (LEDKVRLL) form a leucine-zipper region. The interval 104–215 (TGGSDFSDLN…SSTPLNDNLL (112 aa)) is disordered. A compositionally biased stretch (polar residues) spans 123-148 (HPNNHHSNVSTGTPHGSMSSSNSVAS). 2 stretches are compositionally biased toward low complexity: residues 155–164 (SSASSVSNNS) and 186–215 (QQQQQKVPQGVPDLVSGSSSSSTPLNDNLL). A n-CRD region spans residues 254–261 (CVKLNEAC). 2 cysteine pairs are disulfide-bonded: Cys-254/Cys-446 and Cys-261/Cys-477. The tract at residues 408 to 442 (PEKQEKGKYEPPSTSKTTNNNEEEDKDEVVPAPPQ) is disordered. The segment covering 417–427 (EPPSTSKTTNN) has biased composition (low complexity). Positions 446–477 (CSEIWDRITSHPKYTELDIDGLCNELKSKAKC) are c-CRD. A Nuclear export signal motif is present at residues 462–469 (LDIDGLCN).

Belongs to the bZIP family. YAP subfamily. As to quaternary structure, interacts with YBP1. In terms of processing, upon oxidative stress, is oxidated by the peroxidase GPX3 and stabilized by YBP1. Oxidative stress induces conformational changes through oxidation of cysteine residues, masking the nuclear export signal, thus abolishing nuclear export by CRM1/exportin 1. Post-translationally, phosphorylated in response to H(2)O(2).

It localises to the nucleus. It is found in the cytoplasm. In terms of biological role, transcription activator involved in multidrug resistance, oxidative stress response, and redox homeostasis. Preferentially binds to promoters with the core binding site 5'-TTA[CG]TAA-3'. Involved in the oxidative stress response in via multiple pathways, including the cellular antioxidant defense system, carbohydrate metabolism and energy metabolism, protein degradation, ATP-dependent RNA helicase, and resistance pathways. The ability of the major systemic fungal pathogen of humans to sense and respond to reactive oxygen species, such as H(2)O(2) generated by the host immune system, is required for survival in the host and therefore virulence. Regulates the transcription of COR33, GLR1, GTO1, GTT1, GTT1, TRR1, TRX1, SOD1, CAT1, and the transcription regulator TSA1. Participates in the apoptosis by regulating the expression of the glutathione reductase gene and glutathione content. Also plays a role in the peroxide-mediated induction of MDR1 and other drug response genes such as PDR16, MDR1, FLU1, YCF1, and FCR1. Regulates trehalose accumulation which is important for the oxidative stress tolerance. Recruits ADA2 to its target promoters. Activity of CAP1 is controlled through oxidation of specific cysteine residues resulting in the alteration of its subcellular location. Oxidative stress induces nuclear accumulation and as a result CAP1 transcriptional activity. Nuclear export is restored when disulfide bonds are reduced by thioredoxin, whose expression is controlled by CAP1, providing a mechanism for negative autoregulation. The protein is AP-1-like transcription factor CAP1 of Candida albicans (strain SC5314 / ATCC MYA-2876) (Yeast).